Here is a 168-residue protein sequence, read N- to C-terminus: MNEVKESLRSIEQKYKLFQQQQFTFIAALEHCRENAHDKIRPISSIEQVQSYMEHYCNNSTHRRILIMFMDICSELSKLCQHFEALHSGTPVTNSLLEKCKTLVSQSNDLSSLRAKYPHEVVNHLSCDEARNHYGGVVSLIPIVLDFMKEWIAHSEKLPRKVLQHGTT.

Microtubule inner protein component of sperm flagellar doublet microtubules. Interacts with CABP1 and CALR. Interacts with INCA1. Interacts with microtubules. In terms of tissue distribution, expressed in sperm (at protein level). Expressed from almost all the cell types of testis, with abundant expression in round and elongated spermatids (at protein level). Predominantly expressed in tissues containing motile cilia.

Its subcellular location is the cytoplasm. It localises to the cytoplasmic vesicle. The protein localises to the secretory vesicle. The protein resides in the acrosome. It is found in the cytoskeleton. Its subcellular location is the cilium basal body. It localises to the flagellum axoneme. The protein localises to the cilium axoneme. The protein resides in the nucleus. In terms of biological role, microtubule inner protein (MIP) part of the dynein-decorated doublet microtubules (DMTs) of multiciliated respiratory cells and the distal singlet microtubules of monoflagellated spermatozoa. Forms an extensive interaction network cross-linking the lumen of axonemal doublet microtubules. This Mus musculus (Mouse) protein is Sperm acrosome-associated protein 9.